Here is a 477-residue protein sequence, read N- to C-terminus: PTS system MurNAc-GlcNAc-specific EIIBC component (477 aa).

Positions 5–87 (QQLAHHILDA…VKLSGVQLGE (83 aa)) constitute a PTS EIIB type-1 domain. The active-site Phosphocysteine intermediate; for EIIB activity is the Cys27. A disordered region spans residues 91 to 113 (HRSNTSNIKNQAQQNKREFQQKR). A compositionally biased stretch (polar residues) spans 92–104 (RSNTSNIKNQAQQ). Residues 123–477 (KSIANIFIPL…EMRNLNKLGD (355 aa)) form the PTS EIIC type-1 domain. The next 10 membrane-spanning stretches (helical) occupy residues 128–148 (IFIP…IAAV), 167–187 (VAVL…FTGF), 192–212 (VFGA…LTGI), 227–247 (LIAG…LSII), 267–287 (ISLL…AGFI), 298–318 (VIGV…LPLV), 342–362 (LLPI…ALWV), 377–397 (ALPV…TLPL), 401–421 (FITA…IGHI), and 443–463 (LGYI…TYFF).

The protein localises to the cell membrane. The catalysed reaction is N-acetyl-beta-D-muramate-(1-&gt;4)-N-acetyl-D-glucosamine(out) + N(pros)-phospho-L-histidyl-[protein] = 6-phospho-N-acetyl-beta-D-muramate-(1-&gt;4)-N-acetyl-D-glucosamine(in) + L-histidyl-[protein]. It functions in the pathway cell wall biogenesis; peptidoglycan recycling. Functionally, the phosphoenolpyruvate-dependent sugar phosphotransferase system (sugar PTS), a major carbohydrate active transport system, catalyzes the phosphorylation of incoming sugar substrates concomitantly with their translocation across the cell membrane. This system is involved in the uptake and phosphorylation of MurNAc-GlcNAc, the principle peptidoglycan turnover product of S.aureus, yielding cytoplasmic MurNAc 6P-GlcNAc. This is PTS system MurNAc-GlcNAc-specific EIIBC component from Staphylococcus haemolyticus (strain JCSC1435).